The sequence spans 112 residues: Ribonuclease P protein component (112 aa).

This sequence belongs to the RnpA family. As to quaternary structure, consists of a catalytic RNA component (M1 or rnpB) and a protein subunit.

The enzyme catalyses Endonucleolytic cleavage of RNA, removing 5'-extranucleotides from tRNA precursor.. In terms of biological role, RNaseP catalyzes the removal of the 5'-leader sequence from pre-tRNA to produce the mature 5'-terminus. It can also cleave other RNA substrates such as 4.5S RNA. The protein component plays an auxiliary but essential role in vivo by binding to the 5'-leader sequence and broadening the substrate specificity of the ribozyme. The polypeptide is Ribonuclease P protein component (Mycoplasmopsis synoviae (strain 53) (Mycoplasma synoviae)).